We begin with the raw amino-acid sequence, 308 residues long: Cytochrome c biogenesis protein CcsA (308 aa).

The next 7 helical transmembrane spans lie at 2–22 (IVST…SILI), 44–64 (GMLI…IYLG), 71–91 (LSES…IGYF), 143–163 (MILG…LMVI), 212–232 (VISL…VWAN), 247–267 (WAFI…NINL), and 273–293 (AIVA…VNLV).

Belongs to the CcmF/CycK/Ccl1/NrfE/CcsA family. May interact with Ccs1.

Its subcellular location is the plastid membrane. Required during biogenesis of c-type cytochromes (cytochrome c6 and cytochrome f) at the step of heme attachment. This chain is Cytochrome c biogenesis protein CcsA, found in Cuscuta reflexa (Southern Asian dodder).